We begin with the raw amino-acid sequence, 2974 residues long: MKATVEGEKDASRKVKVPKRPEVNNGGSLEDCISNVFSLLELPGIKWKCFRPKLNAPRGVPLTSDLVLKAYSRCLTDGILCTWRRKPSPPTGNNELLPPTHFFSNDSPKELWVFWYDAEPTALGKYCEGLDSDEELSSANQMNIVSYEVRTILFKALHVVLERDLTKDGFVRFGRWFTMPLVARDHYLHFMYPSHSPAIRFNFFVHGTSTICASIQAQRQPTLIKLARRHFECKTPKRFPVVIGPWSMRGYLIADQMTLLADQKIQEAAEKEWNQWKEYLQLEEKEPENVTEERQKTPEAEPPAPPQTTRVLLASSSDEDQEKNGGELKSEEVSQKIRWMFEPDLRQDKPKEETAAEKEKRMAAREVRRLRRQRREERRREMEKQRRADDNLEDYDSDVVTDQDEDEAGKEEIVNNDVPKMILIEIDNVRLLYPSKFVCITVEEDRQMLESMGFKCHPMPQELQVPGRRPRNKNVVNMSNPLLSTMAVYQYVQNEKRAEREHFYPRNKPVEIETDTNFEILSNPKARRVAPPKSPTFLSWESQRANHFDTTDIFVNRLFEKLFRLDADTFDENPRLIKFACLSSQFIRRKWKWLHKKQILFCGKARKRFGIGSPQNFALNMMKSREKRKEYQPYHRKRPAKSVKEKKKKAKRKVKKFVRYNSPEQFLASMSRTRKKFNAWKQKKKGPPPKKDLAKKEAAADKDKDKDKEKDKEKDKDNDDDPFVMDKVSQLDWANFSEDETNGNSFADIEEALVSEEHIKFSSLYNPAGGDIEEGDETSNESPDEKTPEGSPNGSPRPKEEIEPFFPITYLAAKPSNIESDLGPDVDDMTEEQFNTEYVPKEYDITQDPKKVKNGQIPISEFSKDNQFYHGEICRLGLRGYKKICAERDREEAARRTKWLQLYRLKVEKRSIKTARQCHRDYLRQIAKRCLRKALRRLRITAKKDALAPPPPKPKPVDPVLKKKEDAKKFEMSLKIMERDLGNLDMSAFCQVREKAGPHGVSFPEIILLTNPKWLKVRSTAGYMKPNYFNSPHGSFDHDSEPEFDEQRTGLGEGTSDQYQDGESVDMIDIERELANDPSSYLSNAEHIRTLGEHIGPDGMLSPPASNEMPKGGPLSVGPASIESQGLNQIYPTPPSVQMLQADASQAHSPSIGGKFRSTANDDIDRAAASGKTIVDIEIEDIETGNMQRWNKIANQSKLSKFLVASRDNPILKGRKTKYDTPATDKFEIRCQVERVTVPMAYESMVTRNFECAPPHTFAELIRQSRTGIKKYTRPLQIQSTLARPPPGATSPLPPPTPMFNPHTLPLHHTSPFSAGPMSHHSMGPPAYPPTPGPYPPTTPTYPGMTPRPGSSYGPGYPNHHQMMPPGYPNQMGQMGGMNGMGGMPGMGPIGMQRQFSNPQMYQHHQMMRMQQMRMQGGLPGYGAPGVPQYPQQSPVSGGPESIRNTDAPNDPTVSKLQSAVSRNGKSDDESDAATSIPTATDDATAATTTAAQLQLQRSQAHQIQHQPNQQTMQSLQLTPEQLQIQQSQQVQAVFQQLPDREKRKYQRRQIQLMNGLMPTSLQPASIKALKNPPDANIPYKRQDIIYNPPNPAHPRGDSLTIAIVLSDTLLDLHFDSVFDACPICSCSVSIRSRDLGMYIIPHAVLSSREIGETNKREYTTGTWSGFHVNSATSCTCGFSAIRHRYLSCCAGLFDEDADEATASEHANAPVIPPLFARNTTKTRDMMWFDPQSVHDLALTDQIRQMAFSNSLGKAVSQMATEKEHRRNITNAVDIGTDITVPTEYVLSHVDTLELMMLGMSALGPMQTPETTGNQFTPQSKYLSYFHPWGFQTANEIAELESSEWVDLLDIITPTLESSMKQARRPSVETPFVIEGPMTWKQVVTKAIRGKPPTDEDEDFSLAEPVPAVMRALEQEAVRAAPNIEQYYDQAELGPVDQPKDVMYITIIPDNDDIYERTVKFMHTMTETYERMRLGRHIPFPVSTGTASRFREVLKTYQHQFPYQEQNQQLVEFTNNRLEAVPQELSNNPDPLNTDPEKWSKRLKRKLELSEELKKADEHPAPPSTQSENSEGNAATPAAETLSSIFSDDAFVEERHINSTEEAPTTTERPPNSLPYRITNWHEKDDDTYEHPPEVHDTLPEGFYEREGILRVGKPLEPLRISHTVVSTREFDNMTQHLSDAQGFVSKLRIFLQQMEDLVFHTLSGSSEAFERRGYRYQMAVEGRLKRQKHKRDIEEERLRYEAAKVQDEADKREKMDEADLFPGAEVGEETPSPWVDDELEEKKRNKQKENEQYPAEESQAPSPVPAGMIHIPETLSEQERKVQPTLADMFADPSTVAPINAQNIPWKQRDTRVQNPFPYSNQPPVAFEAVGSNDTDAYSTLPHVIVLYVVNPFSYGAEGQSALHMRIALLSFIRAYNSIVGRLPFTKRTQLQLEIIGMESLDDMVKGIPDYLNDSQVPFDILHDYPVRNERPSESGQEAAARSLSVAVYTHPRVFTPEVYKAVSARCMTAFGPGSQLINTVNNIEKINQEAFYQMSKRSKTALNNMDGYMGMMGSHQVETKAHISYRVPSNIVCLAPPPAIYQMDEEGKPILNQLDEQTLFISYCLVGTEYLVATATDSQGKLIDNCIANMKPRRLHNQVYRYKNKTQILDGMGKLWSFILGVMSSDIKNWRLVVGRLGRIGHGEFRAWTHLLNKTSLLRYSSSLKDICGACRSMPSAIGTPAILSACLITLEPEPSIRIMPKFHDIDESIKKNLIFQTPGDLSCTHILTFPVGTEINLEVQDQTADTKGDENWEFGDLDIMEGLDDGDTEIMKDLGLETPSSAAIRQTGGVSMFFSEDSSSIEIQNQPLASGYYISTAPAPELPSWFWATCPSAKRHSPVHLKSSLHINISEVKNDDIAMESAKDKEKEKEEKDIHPLESRQTEEVLRHVLESYNALSWLNLNRQTGDRYSCLPIHVQHLLRLYHSVARLLV.

4 stretches are compositionally biased toward basic and acidic residues: residues 284–299 (EKEPENVTEERQKTPE), 340–367 (MFEPDLRQDKPKEETAAEKEKRMAAREV), 374–390 (RREERRREMEKQRRADD), and 624–633 (SREKRKEYQP). 12 disordered regions span residues 284-309 (EKEPENVTEERQKTPEAEPPAPPQTT), 340-394 (MFEP…NLED), 624-654 (SREKRKEYQPYHRKRPAKSVKEKKKKAKRKV), 677-749 (FNAW…FADI), 764-801 (LYNPAGGDIEEGDETSNESPDEKTPEGSPNGSPRPKEE), 1032-1063 (PHGSFDHDSEPEFDEQRTGLGEGTSDQYQDGE), 1099-1134 (GMLSPPASNEMPKGGPLSVGPASIESQGLNQIYPTP), 1140-1159 (LQADASQAHSPSIGGKFRST), 1281-1342 (TLAR…TPTY), 1416-1486 (QGGL…DATA), 2052-2078 (ELKKADEHPAPPSTQSENSEGNAATPA), and 2247-2309 (QDEA…PAGM). Positions 351 to 396 (KEETAAEKEKRMAAREVRRLRRQRREERRREMEKQRRADDNLEDYD) form a coiled coil. Composition is skewed to basic residues over residues 634 to 654 (YHRKRPAKSVKEKKKKAKRKV) and 677 to 688 (FNAWKQKKKGPP). Over residues 689-717 (PKKDLAKKEAAADKDKDKDKEKDKEKDKD) the composition is skewed to basic and acidic residues. Positions 1035-1048 (SFDHDSEPEFDEQR) are enriched in basic and acidic residues. Polar residues-rich tracts occupy residues 1122 to 1134 (IESQGLNQIYPTP) and 1140 to 1149 (LQADASQAHS). 2 stretches are compositionally biased toward pro residues: residues 1284–1299 (RPPPGATSPLPPPTPM) and 1326–1340 (PAYPPTPGPYPPTTP). The span at 1443–1464 (IRNTDAPNDPTVSKLQSAVSRN) shows a compositional bias: polar residues. Residues 1473–1486 (AATSIPTATDDATA) show a composition bias toward low complexity. Residues 2064–2073 (STQSENSEGN) show a composition bias toward polar residues. A coiled-coil region spans residues 2220–2301 (AVEGRLKRQK…EQYPAEESQA (82 aa)). Basic and acidic residues-rich tracts occupy residues 2247–2258 (QDEADKREKMDE) and 2281–2292 (EEKKRNKQKENE). The segment at 2347–2974 (WKQRDTRVQN…LYHSVARLLV (628 aa)) is mediates transcriptional repression.

The protein belongs to the Mediator complex subunit 13 family. In terms of assembly, component of the Mediator complex.

The protein resides in the nucleus. Component of the Mediator complex, a coactivator involved in regulated gene transcription of nearly all RNA polymerase II-dependent genes. Mediator functions as a bridge to convey information from gene-specific regulatory proteins to the basal RNA polymerase II transcription machinery. Mediator is recruited to promoters by direct interactions with regulatory proteins and serves as a scaffold for the assembly of a functional preinitiation complex with RNA polymerase II and the general transcription factors. This chain is Mediator of RNA polymerase II transcription subunit 13 (let-19), found in Caenorhabditis briggsae.